A 150-amino-acid polypeptide reads, in one-letter code: Ribosome maturation factor RimP (150 aa).

Belongs to the RimP family.

It is found in the cytoplasm. In terms of biological role, required for maturation of 30S ribosomal subunits. This is Ribosome maturation factor RimP from Klebsiella pneumoniae (strain 342).